The primary structure comprises 683 residues: Acetyl-coenzyme A synthetase 2 (683 aa).

CoA-binding positions include Arg206–Lys209 and Thr325. ATP-binding positions include Gly401–Pro403 and Asp425–Thr430. Residue Asp425–Thr430 coordinates AMP. Residue Lys506 forms a Glycyl lysine isopeptide (Lys-Gly) (interchain with G-Cter in ubiquitin) linkage. Positions 516 and 531 each coordinate ATP. 2 residues coordinate AMP: Asp516 and Arg531. Ser539 serves as a coordination point for CoA. Arg542 contacts ATP. Residue Arg612 coordinates CoA. Ser679 is modified (phosphoserine).

Belongs to the ATP-dependent AMP-binding enzyme family.

Its subcellular location is the cytoplasm. It localises to the nucleus. The catalysed reaction is acetate + ATP + CoA = acetyl-CoA + AMP + diphosphate. It functions in the pathway carbohydrate metabolism; pyruvate metabolism. Catalyzes the production of acetyl-CoA. Provides the acetyl-CoA source for histone acetylation in the nucleus. 'Anaerobic' isozyme of acetyl-coenzyme A synthetase, which is required for growth on fermentable carbon sources such as glucose. May be involved in the PDH (pyruvate dehydrogenase complex) bypass. The polypeptide is Acetyl-coenzyme A synthetase 2 (Saccharomyces cerevisiae (strain ATCC 204508 / S288c) (Baker's yeast)).